We begin with the raw amino-acid sequence, 126 residues long: Aspartate 1-decarboxylase (126 aa).

Ser25 functions as the Schiff-base intermediate with substrate; via pyruvic acid in the catalytic mechanism. Ser25 is subject to Pyruvic acid (Ser). Thr57 serves as a coordination point for substrate. Tyr58 acts as the Proton donor in catalysis. 73–75 (GAA) contacts substrate.

This sequence belongs to the PanD family. Heterooctamer of four alpha and four beta subunits. It depends on pyruvate as a cofactor. Post-translationally, is synthesized initially as an inactive proenzyme, which is activated by self-cleavage at a specific serine bond to produce a beta-subunit with a hydroxyl group at its C-terminus and an alpha-subunit with a pyruvoyl group at its N-terminus.

It localises to the cytoplasm. The catalysed reaction is L-aspartate + H(+) = beta-alanine + CO2. The protein operates within cofactor biosynthesis; (R)-pantothenate biosynthesis; beta-alanine from L-aspartate: step 1/1. Its function is as follows. Catalyzes the pyruvoyl-dependent decarboxylation of aspartate to produce beta-alanine. The protein is Aspartate 1-decarboxylase of Escherichia coli O6:H1 (strain CFT073 / ATCC 700928 / UPEC).